The sequence spans 314 residues: MKQKIHLWIEEYLFFPKFFQKIISFLLLPLTLIYLIIIFTKRFKAKKIDFDIPIISIGNIIVGGSGKTPITIELASKYENACVILRGYGRSSKGLQIVSLNGDIKVDVTVSGDEAMLLAKSLKKATIIVSENRIEAILKAKELGSKIIFLDDGFSKYSISKFDILLKPKNEPTNNFCLPSGGYREPKSFYKKANIVLQEGKDFKRVITIKKDENIKELPSYTILLTAISKPKRLLEFLPKNIKMISFPDHHNFTKEEILDIQNEYKDYAILTTGKDMVKLKEFNLENLYLMDLSIKIDENVDFSSMNSYINSFK.

Ile-61–Thr-68 contacts ATP.

This sequence belongs to the LpxK family.

The catalysed reaction is a lipid A disaccharide + ATP = a lipid IVA + ADP + H(+). The protein operates within glycolipid biosynthesis; lipid IV(A) biosynthesis; lipid IV(A) from (3R)-3-hydroxytetradecanoyl-[acyl-carrier-protein] and UDP-N-acetyl-alpha-D-glucosamine: step 6/6. Functionally, transfers the gamma-phosphate of ATP to the 4'-position of a tetraacyldisaccharide 1-phosphate intermediate (termed DS-1-P) to form tetraacyldisaccharide 1,4'-bis-phosphate (lipid IVA). The polypeptide is Tetraacyldisaccharide 4'-kinase (Aliarcobacter butzleri (strain RM4018) (Arcobacter butzleri)).